A 72-amino-acid polypeptide reads, in one-letter code: MALRFTLTLLLVTILVAAILLGSSEAAYRKPPFNGSIFGKRNSLDYDSAKMSAVCEVAMEACPMWFPQNDSK.

An N-terminal signal peptide occupies residues 1–26 (MALRFTLTLLLVTILVAAILLGSSEA). Residue N34 is glycosylated (N-linked (GlcNAc...) asparagine). Position 38 is a phenylalanine amide (F38). Positions 42–72 (NSLDYDSAKMSAVCEVAMEACPMWFPQNDSK) are excised as a propeptide.

The protein belongs to the FARP (FMRFamide related peptide) family. In terms of tissue distribution, strongly expressed in two pairs of neurons in the pars intercerebralis (at protein level).

Its subcellular location is the secreted. In terms of biological role, ligand for the neuropeptide SIFamide receptor. Modulates sexual behavior by negatively regulating female receptivity to male courtship and by playing a role in male sex discrimination. Also involved in promoting sleep. The polypeptide is Neuropeptide SIFamide (Drosophila melanogaster (Fruit fly)).